The following is a 715-amino-acid chain: Metastasis-associated protein MTA1 (715 aa).

The BAH domain maps to 1–164; that stretch reads MAANMYRVGD…PQQKTLLADK (164 aa). In terms of domain architecture, ELM2 spans 165–276; that stretch reads GEIRVGNRYQ…KAISALVPQG (112 aa). Lysine 182 participates in a covalent cross-link: Glycyl lysine isopeptide (Lys-Gly) (interchain with G-Cter in ubiquitin). The SANT domain maps to 283–335; the sequence is DEMEEWSASEANLFEEALEKYGKDFTDIQQDFLPWKSLTSIIEYYYMWKTTDR. Position 386 is a phosphoserine (serine 386). A GATA-type; atypical zinc finger spans residues 393–420; the sequence is CESCYTTQSYQWYSWGPPNMQCRLCASC. A disordered region spans residues 437 to 460; sequence DGERPGPNRNNMSPHGIPARSSGS. Serine 449 carries the phosphoserine modification. A Glycyl lysine isopeptide (Lys-Gly) (interchain with G-Cter in SUMO2 and SUMO3) cross-link involves residue lysine 509. Serine 522 carries the post-translational modification Phosphoserine. A compositionally biased stretch (basic and acidic residues) spans 542-552; it reads ETHPRPPKPDP. Residues 542 to 590 form a disordered region; the sequence is ETHPRPPKPDPVKSSSSVLSSLTPAKSAPVINNGSPTILGKRSYEQHNG. The SH3-binding motif lies at 545 to 552; the sequence is PRPPKPDP. A Glycyl lysine isopeptide (Lys-Gly) (interchain with G-Cter in SUMO2) cross-link involves residue lysine 549. Residues 553–565 show a composition bias toward low complexity; sequence VKSSSSVLSSLTP. Threonine 564 carries the phosphothreonine modification. Position 576 is a phosphoserine (serine 576). Phosphothreonine is present on threonine 578. At lysine 626 the chain carries N6-acetyllysine; alternate. Lysine 626 participates in a covalent cross-link: Glycyl lysine isopeptide (Lys-Gly) (interchain with G-Cter in ubiquitin); alternate. The residue at position 639 (serine 639) is a Phosphoserine. An interaction with RBBP4 region spans residues 656 to 686; it reads DVFYMATEETRKIRKLLSSSETKRAARRPYK. The interval 673–715 is disordered; sequence SSSETKRAARRPYKPIALRQSQALPLRPPPPAPVNDEPIVIED. Residues 696–705 carry the SH3-binding motif; sequence LPLRPPPPAP. The SUMO interaction motif 1 (SIM); crucial for efficient sumoylation motif lies at 711 to 715; the sequence is IVIED.

This sequence belongs to the metastasis-associated protein family. In terms of assembly, component of the nucleosome remodeling and deacetylase (NuRD) repressor complex, composed of core proteins MTA1, MTA2, MTA3, RBBP4, RBBP7, HDAC1, HDAC2, MBD2, MBD3, and peripherally associated proteins CDK2AP1, CDK2AP2, GATAD2A, GATAD2B, CHD3, CHD4 and CHD5. The exact stoichiometry of the NuRD complex is unknown, and some subunits such as MBD2 and MBD3, GATAD2A and GATAD2B, and CHD3, CHD4 and CHD5 define mutually exclusive NuRD complexes. Interacts with RBBP4; the interaction is direct. Interacts with BMAL1. Interacts with CLOCK. Interacts with COP1. Interacts with CSNK1G2 in the cytoplasm. Interacts with EP300. Interacts with HDAC2. Interacts with ITGB3BP/CENPR. Interacts with MBD3L2. Interacts with MDM2. Interacts with NACC2. Interacts with p53/TP53. Interacts with PIAS1. Interacts with PIAS3. Interacts with PIAS4. Interacts with PWWP2A. Interacts with PWWP2B. Interacts with SENP1. Interacts with SENP2. Interacts with SIX3; facilitates the binding of SIX3 to the core DNA motif of SIX3 promoter. Interacts with SUMO1. Interacts with SUMO2. Interacts with TFCP2L1; which is indispensable for TFCP2L1-mediated self-renewal-promoting effect and endoderm-inhibiting action. Interacts with TFAP2C. Interacts with TPR. Interacts with UBE2I/UBC9. Post-translationally, phosphorylation by CSNK1G2/CK1 triggered by estrogen enhances corepression of estrogen receptor (ER). In terms of processing, acetylation is essential for its transcriptional coactivator activity. Sumoylation positively regulates its transcriptional corepressor activity but does not affect the protein stability. Sumoylated preferentially by SUMO2 or SUMO3 than SUMO1. Sumoylation is enhanced by PIAS1/3/4 and preferentially sumoylated by SUMO2 in the presence of PIAS1/3/4. Desumoylated by SENP1. Post-translationally, ubiquitinated by COP1, which leads to proteasomal degradation. In terms of tissue distribution, widely expressed but not in skeletal muscle. Highly expressed in the brain, liver, kidney and cardiac muscle and in mammary tumors.

It localises to the nucleus. Its subcellular location is the nucleus envelope. The protein resides in the cytoplasm. The protein localises to the cytoskeleton. Transcriptional coregulator which can act as both a transcriptional corepressor and coactivator. Acts as a component of the histone deacetylase NuRD complex which participates in the remodeling of chromatin. In the NuRD complex, regulates transcription of its targets by modifying the acetylation status of the target chromatin and cofactor accessibility to the target DNA. In conjunction with other components of NuRD, acts as a transcriptional corepressor of BRCA1, ESR1, TFF1 and CDKN1A. Acts as a transcriptional coactivator of BCAS3, PAX5 and SUMO2, independent of the NuRD complex. Stimulates the expression of WNT1 by inhibiting the expression of its transcriptional corepressor SIX3. Regulates p53-dependent and -independent DNA repair processes following genotoxic stress. Regulates the stability and function of p53/TP53 by inhibiting its ubiquitination by COP1 and MDM2 thereby regulating the p53-dependent DNA repair. Plays a role in the regulation of the circadian clock and is essential for the generation and maintenance of circadian rhythms under constant light and for normal entrainment of behavior to light-dark (LD) cycles. Positively regulates the CLOCK-BMAL1 heterodimer mediated transcriptional activation of its own transcription and the transcription of CRY1. Regulates deacetylation of BMAL1 by regulating SIRT1 expression, resulting in derepressing CRY1-mediated transcription repression. With Tfcp2l1, promotes establishment and maintenance of pluripotency in embryonic stem cells (ESCs) and inhibits endoderm differentiation. The protein is Metastasis-associated protein MTA1 (Mta1) of Mus musculus (Mouse).